Here is a 383-residue protein sequence, read N- to C-terminus: 8-amino-7-oxononanoate synthase (383 aa).

Position 21 (arginine 21) interacts with substrate. 108-109 (GY) contributes to the pyridoxal 5'-phosphate binding site. Histidine 133 contributes to the substrate binding site. Pyridoxal 5'-phosphate contacts are provided by serine 179, histidine 207, and threonine 233. Lysine 236 bears the N6-(pyridoxal phosphate)lysine mark. Threonine 350 serves as a coordination point for substrate.

This sequence belongs to the class-II pyridoxal-phosphate-dependent aminotransferase family. BioF subfamily. Homodimer. It depends on pyridoxal 5'-phosphate as a cofactor.

The enzyme catalyses 6-carboxyhexanoyl-[ACP] + L-alanine + H(+) = (8S)-8-amino-7-oxononanoate + holo-[ACP] + CO2. It functions in the pathway cofactor biosynthesis; biotin biosynthesis. Catalyzes the decarboxylative condensation of pimeloyl-[acyl-carrier protein] and L-alanine to produce 8-amino-7-oxononanoate (AON), [acyl-carrier protein], and carbon dioxide. This chain is 8-amino-7-oxononanoate synthase, found in Yersinia pestis bv. Antiqua (strain Angola).